The sequence spans 152 residues: Transcriptional repressor NrdR (152 aa).

A zinc finger spans residues C3–C34. Positions P49–E139 constitute an ATP-cone domain.

The protein belongs to the NrdR family. Requires Zn(2+) as cofactor.

Functionally, negatively regulates transcription of bacterial ribonucleotide reductase nrd genes and operons by binding to NrdR-boxes. The chain is Transcriptional repressor NrdR from Chromobacterium violaceum (strain ATCC 12472 / DSM 30191 / JCM 1249 / CCUG 213 / NBRC 12614 / NCIMB 9131 / NCTC 9757 / MK).